Reading from the N-terminus, the 381-residue chain is Cobalt-precorrin-5B C(1)-methyltransferase (381 aa).

The protein belongs to the CbiD family.

It carries out the reaction Co-precorrin-5B + S-adenosyl-L-methionine = Co-precorrin-6A + S-adenosyl-L-homocysteine. It participates in cofactor biosynthesis; adenosylcobalamin biosynthesis; cob(II)yrinate a,c-diamide from sirohydrochlorin (anaerobic route): step 6/10. Functionally, catalyzes the methylation of C-1 in cobalt-precorrin-5B to form cobalt-precorrin-6A. In Prochlorococcus marinus (strain NATL2A), this protein is Cobalt-precorrin-5B C(1)-methyltransferase.